Here is a 543-residue protein sequence, read N- to C-terminus: Chaperonin GroEL 2 (543 aa).

ATP is bound by residues 29-32 (TLGP), 86-90 (DGTTT), Gly413, 477-479 (DAA), and Asp493. Residues 523 to 543 (PQEPEPAAGGHGHGHQHGPGF) form a disordered region. Basic residues predominate over residues 534–543 (GHGHQHGPGF).

The protein belongs to the chaperonin (HSP60) family. Forms a cylinder of 14 subunits composed of two heptameric rings stacked back-to-back. Interacts with the co-chaperonin GroES.

Its subcellular location is the cytoplasm. It catalyses the reaction ATP + H2O + a folded polypeptide = ADP + phosphate + an unfolded polypeptide.. In terms of biological role, together with its co-chaperonin GroES, plays an essential role in assisting protein folding. The GroEL-GroES system forms a nano-cage that allows encapsulation of the non-native substrate proteins and provides a physical environment optimized to promote and accelerate protein folding. In Salinispora tropica (strain ATCC BAA-916 / DSM 44818 / JCM 13857 / NBRC 105044 / CNB-440), this protein is Chaperonin GroEL 2.